A 351-amino-acid polypeptide reads, in one-letter code: MLYSLFKKYLFRLDAEEVHEKVCKILKILSRSPFFCNLIHAQFGYTNPKLENEILGLHFPNPLGLAAGFDKNASMIRALTAFGFGYLEAGTLTNTAQSGNEKPRLFRHIEEESLQNAMGFNNYGAVLGVRAFERFAPYKTPIGINLGKNKHIEQDNALEDYKAVLIKCLNIGDYYTFNLSSPNTPNLRDLQNKAFVSELFCMAKEMTKKPLFLKIAPDLEIDAMLEITNSAIEAGANGIIATNTTIDKSLVFAPKETGGLSGKCLTQKSREIFKELAKAFFNKTILVSVGGISDAKEAYERIKMGASLLQIYSAFIYNGPNLCQNILKDLVKLLQKDGFLSVKEVIGADLR.

Residues alanine 67–lysine 71 and threonine 91 each bind FMN. Lysine 71 is a binding site for substrate. Residue asparagine 116 to phenylalanine 120 coordinates substrate. Asparagine 145 and asparagine 178 together coordinate FMN. Asparagine 178 is a substrate binding site. The active-site Nucleophile is the serine 181. Asparagine 183 is a substrate binding site. FMN is bound by residues lysine 214 and threonine 242. Asparagine 243–threonine 244 serves as a coordination point for substrate. Residues glycine 262, glycine 291, and tyrosine 312–serine 313 each bind FMN.

The protein belongs to the dihydroorotate dehydrogenase family. Type 2 subfamily. In terms of assembly, monomer. FMN serves as cofactor.

The protein localises to the cell membrane. The enzyme catalyses (S)-dihydroorotate + a quinone = orotate + a quinol. It functions in the pathway pyrimidine metabolism; UMP biosynthesis via de novo pathway; orotate from (S)-dihydroorotate (quinone route): step 1/1. Catalyzes the conversion of dihydroorotate to orotate with quinone as electron acceptor. The protein is Dihydroorotate dehydrogenase (quinone) of Helicobacter acinonychis (strain Sheeba).